Consider the following 315-residue polypeptide: Aspartate carbamoyltransferase catalytic subunit (315 aa).

Residues Arg-65 and Thr-66 each coordinate carbamoyl phosphate. Lys-93 contributes to the L-aspartate binding site. Carbamoyl phosphate contacts are provided by Arg-115, His-143, and Gln-146. L-aspartate contacts are provided by Arg-176 and Arg-231. Carbamoyl phosphate-binding residues include Gly-272 and Pro-273.

The protein belongs to the aspartate/ornithine carbamoyltransferase superfamily. ATCase family. Heterododecamer (2C3:3R2) of six catalytic PyrB chains organized as two trimers (C3), and six regulatory PyrI chains organized as three dimers (R2).

It catalyses the reaction carbamoyl phosphate + L-aspartate = N-carbamoyl-L-aspartate + phosphate + H(+). The protein operates within pyrimidine metabolism; UMP biosynthesis via de novo pathway; (S)-dihydroorotate from bicarbonate: step 2/3. Its function is as follows. Catalyzes the condensation of carbamoyl phosphate and aspartate to form carbamoyl aspartate and inorganic phosphate, the committed step in the de novo pyrimidine nucleotide biosynthesis pathway. The chain is Aspartate carbamoyltransferase catalytic subunit from Hyphomonas neptunium (strain ATCC 15444).